A 163-amino-acid polypeptide reads, in one-letter code: Deoxyuridine 5'-triphosphate nucleotidohydrolase (163 aa).

The protein belongs to the dUTPase family. Mg(2+) serves as cofactor.

The enzyme catalyses dUTP + H2O = dUMP + diphosphate + H(+). The protein operates within pyrimidine metabolism; dUMP biosynthesis; dUMP from dCTP (dUTP route): step 2/2. Functionally, this enzyme is involved in nucleotide metabolism: it produces dUMP, the immediate precursor of thymidine nucleotides and it decreases the intracellular concentration of dUTP so that uracil cannot be incorporated into DNA. The protein is Deoxyuridine 5'-triphosphate nucleotidohydrolase of Galliformes (FAdV-8).